The following is a 539-amino-acid chain: Ell-associated factor Eaf (539 aa).

The tract at residues 119–539 (TRSEMTHHKP…SSNSSDDDDD (421 aa)) is disordered. Over residues 132–146 (PATNINHNNIPMSTN) the composition is skewed to polar residues. Residues 151–163 (GPGPGPGSGPSPP) show a composition bias toward pro residues. A compositionally biased stretch (polar residues) spans 174–195 (KLENSTMRISSKTKVSTGSRRN). Residue Ser-205 is modified to Phosphoserine. Polar residues predominate over residues 220–238 (RSPQSAPAWNANNAQQTLP). Low complexity-rich tracts occupy residues 267 to 278 (SGSSTGSSTGQP), 309 to 337 (MHQNHQQHPSPPMHQQQQQQQQQQHYGRG), and 345 to 375 (NNYAQQQQPQQHHQQQEQQRPSSSSTYSHHS). Over residues 420–435 (DSSDSDSGSESDDSTD) the composition is skewed to acidic residues. Composition is skewed to low complexity over residues 461–493 (HQQLQQQPPQQQQQQQQQQQYNHHMQQQHQPQQ) and 520–533 (NDLLQNDLQLSSNS).

Belongs to the EAF family.

The protein resides in the nucleus. Promotes transcriptional elongation by Su(Tpl)/ELL. Essential for development. This chain is Ell-associated factor Eaf, found in Drosophila willistoni (Fruit fly).